A 272-amino-acid chain; its full sequence is Tail assembly protein Gp25 (272 aa).

Residues 219–272 are disordered; that stretch reads NRDPKKPKPKAPKSYPRPDDLEKTTPKPGSFAAMVVRAKKAARERREREEESAE. Composition is skewed to basic and acidic residues over residues 234 to 243 and 262 to 272; these read PRPDDLEKTT and ERREREEESAE.

It belongs to the L5likevirus tail assembly protein family. As to quaternary structure, interacts with tail assembly protein Gp24 and tape measure protein.

Promotes tail assembly by creating a scaffold for the tail tube proteins. The tail assembly proteins Gp24 and Gp25 would wrap the linear tape measure protein to create a tail assembly scaffold. It would allow polymerization of tail tube protein during which Gp24 and Gp25 are released and therefore are absent from the mature virion. The tail assembly protein Gp25 is produced by a rare -1 ribosomal frameshift. The ratio Gp24/Gp25 is important for proper tail assembly. The chain is Tail assembly protein Gp25 (25) from Mycobacterium phage L5 (Mycobacteriophage L5).